We begin with the raw amino-acid sequence, 270 residues long: Cyclase-like protein 3 (270 aa).

Residues 1–23 (MMAHLAPLFLLLLLLLLPLHAAA) form the signal peptide.

It belongs to the Cyclase 1 superfamily. As to expression, highly expressed in leaf sheaths. leaf collars and flag leaves. Expressed in roots, stems, glumes, young panicles and pistils.

It is found in the secreted. Its subcellular location is the extracellular space. The protein localises to the extracellular matrix. May be involved in response to stresses. The protein is Cyclase-like protein 3 of Oryza sativa subsp. japonica (Rice).